Reading from the N-terminus, the 273-residue chain is METNVPKRKEPAKSLRIKVISMGNAEVGKSCIIKRYCEKRFVSKYLATIGIDYGVTKVQVRDREIKVNIFDMAGHPFFFEVRNEFYKDTQGVILVYDVGQKDSFDALDSWLAEMKQELGPHGNMDNIVFVVCANKIDCSKHRCIDESEGRLWAESKGFLYFETSAQTGEGINEMFQTFYLSIVDLCENGGKRPTASSSASFTKEQADTIRRIRNSKDSWEMLGVRPGASREEVNKAYRKLAVLLHPDKCVAPGSEDAFKAVVNARTALLKNIK.

The tract at residues methionine 1 to lysine 18 is required for interaction with MAPK1. Residues glycine 23–serine 30, aspartate 71–histidine 75, and asparagine 134–aspartate 137 each bind GTP. Positions aspartate 217–lysine 273 constitute a J domain.

This sequence belongs to the small GTPase superfamily. Rab family. In terms of assembly, interacts directly with MAPK1 (wild-type and kinase-deficient forms). Interacts directly (in GTP-bound form) with MAP2K1 (wild-type and kinase-deficient forms).

It is found in the nucleus. In terms of biological role, GTPase which can activate the MEK/ERK pathway and induce cell transformation when overexpressed. May act as a nuclear scaffold for MAPK1, probably by association with MAPK1 nuclear export signal leading to enhanced ERK1/ERK2 signaling. The polypeptide is DnaJ homolog subfamily C member 27 (Dnajc27) (Mus musculus (Mouse)).